Here is a 292-residue protein sequence, read N- to C-terminus: MTTTRYRPTWDLALDPLVSCKLCLGEYPVEQMTTIAQCQCIFCTLCLKQYVELLIKEGLETAISCPDAACPKQGHLQENEIECMVAAEIMQRYKKLQFEREVLFDPCRTWCPASTCQAVCQLQDVGLQTPQPVQCKACRMEFCSTCKASWHPGQGCPETMPITFLPGETSAAFKMEEDDAPIKRCPKCKVYIERDEGCAQMMCKNCKHAFCWYCLESLDDDFLLIHYDKGPCRNKLGHSRASVIWHRTQVVGIFAGFGLLLLVASPFLLLATPFVLCCKCKCSKGDDDPLPT.

The interval 16 to 236 (PLVSCKLCLG…YDKGPCRNKL (221 aa)) is TRIAD supradomain. Positions 20, 23, 43, 46, 111, 116, 135, 138, 143, 146, 151, 156, 185, and 188 each coordinate Zn(2+). The segment at 20–70 (CKLCLGEYPVEQMTTIAQCQCIFCTLCLKQYVELLIKEGLETAISCPDAAC) adopts an RING-type 1 zinc-finger fold. An IBR-type zinc finger spans residues 91–156 (QRYKKLQFER…KASWHPGQGC (66 aa)). Residues 185 to 214 (CPKCKVYIERDEGCAQMMCKNCKHAFCWYC) form an RING-type 2; atypical zinc finger. Cysteine 198 is an active-site residue. 6 residues coordinate Zn(2+): cysteine 203, cysteine 206, cysteine 211, cysteine 214, histidine 226, and cysteine 232. Residues 250–270 (VVGIFAGFGLLLLVASPFLLL) traverse the membrane as a helical segment.

This sequence belongs to the RBR family. RNF144 subfamily. In terms of assembly, self-associates. Interacts with UBE2L3. Post-translationally, auto-ubiquitinated.

It is found in the cell membrane. Its subcellular location is the cytoplasmic vesicle membrane. The protein resides in the endosome membrane. The protein localises to the endoplasmic reticulum membrane. The enzyme catalyses [E2 ubiquitin-conjugating enzyme]-S-ubiquitinyl-L-cysteine + [acceptor protein]-L-lysine = [E2 ubiquitin-conjugating enzyme]-L-cysteine + [acceptor protein]-N(6)-ubiquitinyl-L-lysine.. Its pathway is protein modification; protein ubiquitination. Functionally, E3 ubiquitin-protein ligase which accepts ubiquitin from E2 ubiquitin-conjugating enzymes UBE2L3 and UBE2L6 in the form of a thioester and then directly transfers the ubiquitin to targeted substrates. Mediates the ubiquitination and degradation of the DNA damage kinase PRKDC during DNA damage. Positively regulates DNA virus or exogenous cytosolic DNA-triggered innate immune response by mediating STING1 ubiquitination and increasing its 'Lys-6'-linked ubiquitination and translocation from the endoplasmic reticulum to the Golgi leading to downstream signaling pathways. Plays a positive role in EGF-dependent cell proliferation by prolonging EGF/EGFR signaling during EGF stimulation through EGFR ubiquitination. Increases ERK activity independently of EGFR signaling by promoting polyubiquitination and subsequent degradation of VRK3 in the cytosol. This chain is E3 ubiquitin-protein ligase RNF144A (RNF144A), found in Homo sapiens (Human).